Consider the following 259-residue polypeptide: UPF0246 protein PSPA7_1607 (259 aa).

The protein belongs to the UPF0246 family.

In Pseudomonas paraeruginosa (strain DSM 24068 / PA7) (Pseudomonas aeruginosa (strain PA7)), this protein is UPF0246 protein PSPA7_1607.